The chain runs to 258 residues: Mitochondrial distribution and morphology protein 12 (258 aa).

An SMP-LTD domain is found at 1 to 233; that stretch reads MSFDIHWSNL…WPSWIELDFN (233 aa). The interval 238-258 is disordered; the sequence is EDLQQSKDTPTTANTGTTTTN. Residues 246–258 are compositionally biased toward low complexity; that stretch reads TPTTANTGTTTTN.

Belongs to the MDM12 family. Component of the ER-mitochondria encounter structure (ERMES) or MDM complex, composed of MMM1, MDM10, MDM12 and MDM34. An MMM1 homodimer associates with one molecule of MDM12 on each side in a pairwise head-to-tail manner, and the SMP-LTD domains of MMM1 and MDM12 generate a continuous hydrophobic tunnel for phospholipid trafficking.

It is found in the mitochondrion outer membrane. The protein localises to the endoplasmic reticulum membrane. In terms of biological role, component of the ERMES/MDM complex, which serves as a molecular tether to connect the endoplasmic reticulum (ER) and mitochondria. Components of this complex are involved in the control of mitochondrial shape and protein biogenesis, and function in nonvesicular lipid trafficking between the ER and mitochondria. MDM12 is required for the interaction of the ER-resident membrane protein MMM1 and the outer mitochondrial membrane-resident beta-barrel protein MDM10. The MDM12-MMM1 subcomplex functions in the major beta-barrel assembly pathway that is responsible for biogenesis of all mitochondrial outer membrane beta-barrel proteins, and acts in a late step after the SAM complex. The MDM10-MDM12-MMM1 subcomplex further acts in the TOM40-specific pathway after the action of the MDM12-MMM1 complex. Essential for establishing and maintaining the structure of mitochondria and maintenance of mtDNA nucleoids. The chain is Mitochondrial distribution and morphology protein 12 from Zygosaccharomyces rouxii (strain ATCC 2623 / CBS 732 / NBRC 1130 / NCYC 568 / NRRL Y-229).